The following is a 307-amino-acid chain: Agmatinase (307 aa).

His128, Asp151, His153, Asp155, Asp232, and Asp234 together coordinate Mn(2+).

This sequence belongs to the arginase family. Agmatinase subfamily. Requires Mn(2+) as cofactor.

The catalysed reaction is agmatine + H2O = urea + putrescine. It participates in amine and polyamine biosynthesis; putrescine biosynthesis via agmatine pathway; putrescine from agmatine: step 1/1. Functionally, catalyzes the formation of putrescine from agmatine. This is Agmatinase from Neisseria meningitidis serogroup C (strain 053442).